A 553-amino-acid chain; its full sequence is Expansin-like protein 7 (553 aa).

The signal sequence occupies residues 1–19; sequence MRLLGSLILTLSLIASAFS. Asparagine 39 carries an N-linked (GlcNAc...) asparagine glycan. The Expansin-like EG45 domain occupies 41 to 139; the sequence is SGSCEYGAYN…RKVSCDASGP (99 aa). Intrachain disulfides connect cysteine 44–cysteine 73 and cysteine 76–cysteine 134. N-linked (GlcNAc...) asparagine glycosylation is found at asparagine 276, asparagine 325, and asparagine 406. Disordered stretches follow at residues 421–447 and 460–531; these read GGSG…SSTA and SSSA…DEHH. Composition is skewed to low complexity over residues 460-476 and 484-493; these read SSSA…AGGK and ISTSGITGSG. Residues 497–516 are compositionally biased toward polar residues; that stretch reads AASTSKTTSNPTGKTTGMTG. The segment covering 520 to 531 has biased composition (basic and acidic residues); it reads DHSESHSSDEHH.

The protein belongs to the expansin family. Expansin A subfamily.

It localises to the secreted. In terms of biological role, may serve to lubricate the movement of the cellulose microfibrils during cell growth and wall extension and/or may serve to maintain the fluid state of the slug cell wall. Overexpression shows aberrant stalk formation. The chain is Expansin-like protein 7 (expl7) from Dictyostelium discoideum (Social amoeba).